The primary structure comprises 107 residues: UPF0060 membrane protein PSHAa1175 (107 aa).

4 helical membrane-spanning segments follow: residues 3–23 (IFGL…LPYL), 30–50 (SVWL…LLSL), 60–80 (AAYG…VDGI), and 84–104 (TWDL…MFAP).

This sequence belongs to the UPF0060 family.

Its subcellular location is the cell inner membrane. The chain is UPF0060 membrane protein PSHAa1175 from Pseudoalteromonas translucida (strain TAC 125).